Here is a 273-residue protein sequence, read N- to C-terminus: 3-methyl-2-oxobutanoate hydroxymethyltransferase (273 aa).

Mg(2+)-binding residues include Asp-53 and Asp-92. Residues 53–54 (DS), Asp-92, and Lys-122 each bind 3-methyl-2-oxobutanoate. Glu-124 contributes to the Mg(2+) binding site. The active-site Proton acceptor is Glu-191.

Belongs to the PanB family. As to quaternary structure, homodecamer; pentamer of dimers. It depends on Mg(2+) as a cofactor.

Its subcellular location is the cytoplasm. It catalyses the reaction 3-methyl-2-oxobutanoate + (6R)-5,10-methylene-5,6,7,8-tetrahydrofolate + H2O = 2-dehydropantoate + (6S)-5,6,7,8-tetrahydrofolate. The protein operates within cofactor biosynthesis; (R)-pantothenate biosynthesis; (R)-pantoate from 3-methyl-2-oxobutanoate: step 1/2. In terms of biological role, catalyzes the reversible reaction in which hydroxymethyl group from 5,10-methylenetetrahydrofolate is transferred onto alpha-ketoisovalerate to form ketopantoate. The protein is 3-methyl-2-oxobutanoate hydroxymethyltransferase of Phocaeicola vulgatus (strain ATCC 8482 / DSM 1447 / JCM 5826 / CCUG 4940 / NBRC 14291 / NCTC 11154) (Bacteroides vulgatus).